A 312-amino-acid chain; its full sequence is Malate dehydrogenase (312 aa).

Residues 7-13 and D34 each bind NAD(+); that span reads GAAGGIG. Residues R81 and R87 each contribute to the substrate site. Residues N94 and 117–119 each bind NAD(+); that span reads ITN. N119 and R153 together coordinate substrate. The Proton acceptor role is filled by H177. M227 is a binding site for NAD(+).

This sequence belongs to the LDH/MDH superfamily. MDH type 1 family. In terms of assembly, homodimer.

It catalyses the reaction (S)-malate + NAD(+) = oxaloacetate + NADH + H(+). Its function is as follows. Catalyzes the reversible oxidation of malate to oxaloacetate. The chain is Malate dehydrogenase from Serratia proteamaculans (strain 568).